The following is a 132-amino-acid chain: DNA-directed RNA polymerase subunit Rpo8 (132 aa).

The protein belongs to the archaeal Rpo8 RNA polymerase subunit family. Part of the 13-subunit RNA polymerase complex.

The protein localises to the cytoplasm. The enzyme catalyses RNA(n) + a ribonucleoside 5'-triphosphate = RNA(n+1) + diphosphate. Functionally, DNA-dependent RNA polymerase (RNAP) catalyzes the transcription of DNA into RNA using the four ribonucleoside triphosphates as substrates. This chain is DNA-directed RNA polymerase subunit Rpo8, found in Saccharolobus solfataricus (strain ATCC 35092 / DSM 1617 / JCM 11322 / P2) (Sulfolobus solfataricus).